The chain runs to 326 residues: 4-hydroxy-3-methylbut-2-enyl diphosphate reductase (326 aa).

C22 contributes to the [4Fe-4S] cluster binding site. 2 residues coordinate (2E)-4-hydroxy-3-methylbut-2-enyl diphosphate: H51 and H84. Dimethylallyl diphosphate is bound by residues H51 and H84. 2 residues coordinate isopentenyl diphosphate: H51 and H84. C106 is a [4Fe-4S] cluster binding site. H134 contacts (2E)-4-hydroxy-3-methylbut-2-enyl diphosphate. H134 contacts dimethylallyl diphosphate. Residue H134 participates in isopentenyl diphosphate binding. The active-site Proton donor is the E136. T174 is a binding site for (2E)-4-hydroxy-3-methylbut-2-enyl diphosphate. C204 lines the [4Fe-4S] cluster pocket. Positions 232, 233, 234, and 276 each coordinate (2E)-4-hydroxy-3-methylbut-2-enyl diphosphate. Residues S232, S233, N234, and S276 each coordinate dimethylallyl diphosphate. 4 residues coordinate isopentenyl diphosphate: S232, S233, N234, and S276.

It belongs to the IspH family. [4Fe-4S] cluster is required as a cofactor.

It carries out the reaction isopentenyl diphosphate + 2 oxidized [2Fe-2S]-[ferredoxin] + H2O = (2E)-4-hydroxy-3-methylbut-2-enyl diphosphate + 2 reduced [2Fe-2S]-[ferredoxin] + 2 H(+). The enzyme catalyses dimethylallyl diphosphate + 2 oxidized [2Fe-2S]-[ferredoxin] + H2O = (2E)-4-hydroxy-3-methylbut-2-enyl diphosphate + 2 reduced [2Fe-2S]-[ferredoxin] + 2 H(+). Its pathway is isoprenoid biosynthesis; dimethylallyl diphosphate biosynthesis; dimethylallyl diphosphate from (2E)-4-hydroxy-3-methylbutenyl diphosphate: step 1/1. The protein operates within isoprenoid biosynthesis; isopentenyl diphosphate biosynthesis via DXP pathway; isopentenyl diphosphate from 1-deoxy-D-xylulose 5-phosphate: step 6/6. In terms of biological role, catalyzes the conversion of 1-hydroxy-2-methyl-2-(E)-butenyl 4-diphosphate (HMBPP) into a mixture of isopentenyl diphosphate (IPP) and dimethylallyl diphosphate (DMAPP). Acts in the terminal step of the DOXP/MEP pathway for isoprenoid precursor biosynthesis. The protein is 4-hydroxy-3-methylbut-2-enyl diphosphate reductase of Bordetella parapertussis (strain 12822 / ATCC BAA-587 / NCTC 13253).